The following is a 639-amino-acid chain: UPF0313 protein CLJ_B0249 (639 aa).

Positions 295-566 constitute a Radical SAM core domain; it reads AIKEVKFSIT…RMQRSLLQFS (272 aa). 3 residues coordinate [4Fe-4S] cluster: Cys309, Cys313, and Cys316. Residues 597–639 are disordered; sequence YNKPYKKSHKKNNAKNKNNNYNKNKDVSKKNKKNSLSKHKKRK. Basic residues-rich tracts occupy residues 600 to 610 and 626 to 639; these read PYKKSHKKNNA and KNKKNSLSKHKKRK.

This sequence belongs to the UPF0313 family. [4Fe-4S] cluster is required as a cofactor.

This chain is UPF0313 protein CLJ_B0249, found in Clostridium botulinum (strain 657 / Type Ba4).